An 88-amino-acid chain; its full sequence is Beta-insect excitatory toxin LqhIT1d (88 aa).

The N-terminal stretch at 1 to 18 (MKFFLLFLVVLPIMGVLG) is a signal peptide. An LCN-type CS-alpha/beta domain is found at 20-83 (KNGFAVDSNG…ISDTRKKLCD (64 aa)). Cystine bridges form between Cys-34–Cys-55, Cys-40–Cys-60, Cys-44–Cys-62, and Cys-56–Cys-82.

This sequence belongs to the long (4 C-C) scorpion toxin superfamily. Sodium channel inhibitor family. Beta subfamily. As to expression, expressed by the venom gland.

The protein resides in the secreted. Functionally, excitatory insect toxins induce a spastic paralysis. They bind voltage-independently at site-4 of sodium channels (Nav) and shift the voltage of activation toward more negative potentials thereby affecting sodium channel activation and promoting spontaneous and repetitive firing. The protein is Beta-insect excitatory toxin LqhIT1d of Leiurus hebraeus (Hebrew deathstalker scorpion).